We begin with the raw amino-acid sequence, 311 residues long: Thioredoxin reductase (311 aa).

FAD-binding positions include 31–39 (FEKGMPGGQ) and 32–39 (EKGMPGGQ). C133 and C136 form a disulfide bridge. Residue 281–290 (DIRIFAPKQV) participates in FAD binding.

It belongs to the class-II pyridine nucleotide-disulfide oxidoreductase family. Homodimer. The cofactor is FAD.

It is found in the cytoplasm. It catalyses the reaction [thioredoxin]-dithiol + NADP(+) = [thioredoxin]-disulfide + NADPH + H(+). The chain is Thioredoxin reductase (trxB) from Helicobacter pylori (strain J99 / ATCC 700824) (Campylobacter pylori J99).